We begin with the raw amino-acid sequence, 100 residues long: Protein RnfH (100 aa).

It belongs to the UPF0125 (RnfH) family.

This Pseudomonas paraeruginosa (strain DSM 24068 / PA7) (Pseudomonas aeruginosa (strain PA7)) protein is Protein RnfH.